The primary structure comprises 820 residues: Protein phosphatase 1 regulatory subunit 29 (820 aa).

Residues 1–22 form the signal peptide; sequence MLRLGLCAAALLCVCRPGAVRA. The Extracellular portion of the chain corresponds to 23–397; that stretch reads DCWLIEGDKG…APSTSTTTHY (375 aa). N-linked (GlcNAc...) asparagine glycosylation occurs at asparagine 54. 5 LRR repeats span residues 56–77, 80–101, 104–125, 128–149, and 152–173; these read TVHD…SLNR, NLTD…AFLG, SLQV…MLRG, RLQF…AFSE, and SLIS…TFAS. N-linked (GlcNAc...) asparagine glycans are attached at residues asparagine 80, asparagine 85, and asparagine 117. The 63-residue stretch at 185-247 folds into the LRRCT domain; sequence NPFNCECDLF…ITVLQAKCRN (63 aa). N-linked (GlcNAc...) asparagine glycosylation is found at asparagine 205 and asparagine 247. The interval 250-294 is disordered; the sequence is LPARPVSHPTPYSTDAQREPDENSGFNPDEILSVEPPASSTTDAS. In terms of domain architecture, Fibronectin type-III spans 292–379; it reads DASAGPAIKL…FNHTCLTFTT (88 aa). Residues 398–418 form a helical membrane-spanning segment; the sequence is IMTILGCLFGMVIVLGAVYYC. At 419–820 the chain is on the cytoplasmic side; the sequence is LRKRRMQEEK…WKGVSAQQKL (402 aa). 2 disordered regions span residues 508 to 527 and 589 to 612; these read GAGG…LENG and SATG…SSHH. Phosphoserine is present on residues serine 619, serine 668, and serine 672. Residues 654–677 are disordered; that stretch reads TGLAKGDSKYIEKGSPLNSPLDRL.

As to quaternary structure, interacts with PPP1CA.

The protein resides in the membrane. In terms of biological role, inhibits phosphatase activity of protein phosphatase 1 (PP1) complexes. The chain is Protein phosphatase 1 regulatory subunit 29 (ELFN2) from Homo sapiens (Human).